The primary structure comprises 297 residues: Golgi-associated RAB2 interactor protein 1A (297 aa).

The interval 226–257 (SNRHQTSRDRHTDTATETDNSGNCKSTPLVAS) is disordered. Over residues 240–257 (ATETDNSGNCKSTPLVAS) the composition is skewed to polar residues.

The protein belongs to the GARIN family. As to quaternary structure, interacts (via N-terminus) with RAB2B (in GTP-bound form). In terms of tissue distribution, expressed in testis (at protein level).

It is found in the golgi apparatus. In terms of biological role, RAB2B effector protein required for accurate acrosome formation and normal male fertility. In Mus musculus (Mouse), this protein is Golgi-associated RAB2 interactor protein 1A.